The chain runs to 84 residues: Small ribosomal subunit protein uS17 (84 aa).

It belongs to the universal ribosomal protein uS17 family. Part of the 30S ribosomal subunit.

Functionally, one of the primary rRNA binding proteins, it binds specifically to the 5'-end of 16S ribosomal RNA. The polypeptide is Small ribosomal subunit protein uS17 (Clostridium novyi (strain NT)).